We begin with the raw amino-acid sequence, 415 residues long: Serine hydroxymethyltransferase (415 aa).

Residues L117 and 121 to 123 (GHL) each bind (6S)-5,6,7,8-tetrahydrofolate. K226 bears the N6-(pyridoxal phosphate)lysine mark. 349–351 (SPF) serves as a coordination point for (6S)-5,6,7,8-tetrahydrofolate.

Belongs to the SHMT family. As to quaternary structure, homodimer. Pyridoxal 5'-phosphate serves as cofactor.

Its subcellular location is the cytoplasm. It carries out the reaction (6R)-5,10-methylene-5,6,7,8-tetrahydrofolate + glycine + H2O = (6S)-5,6,7,8-tetrahydrofolate + L-serine. It functions in the pathway one-carbon metabolism; tetrahydrofolate interconversion. It participates in amino-acid biosynthesis; glycine biosynthesis; glycine from L-serine: step 1/1. In terms of biological role, catalyzes the reversible interconversion of serine and glycine with tetrahydrofolate (THF) serving as the one-carbon carrier. This reaction serves as the major source of one-carbon groups required for the biosynthesis of purines, thymidylate, methionine, and other important biomolecules. Also exhibits THF-independent aldolase activity toward beta-hydroxyamino acids, producing glycine and aldehydes, via a retro-aldol mechanism. This is Serine hydroxymethyltransferase from Geobacter sp. (strain M21).